A 281-amino-acid chain; its full sequence is Proteasome subunit beta 2 (281 aa).

The propeptide at 1–53 (MEANTRSTGRLPAAFLTPGSSSFMDFLSEHQPEILPGNRQLPPTQGVIEAPHG) is removed in mature form; by autocatalysis. The active-site Nucleophile is the Thr54.

It belongs to the peptidase T1B family. As to quaternary structure, the 20S proteasome core is composed of 14 alpha and 14 beta subunits that assemble into four stacked heptameric rings, resulting in a barrel-shaped structure. The two inner rings, each composed of seven catalytic beta subunits, are sandwiched by two outer rings, each composed of seven alpha subunits. The catalytic chamber with the active sites is on the inside of the barrel. Has a gated structure, the ends of the cylinder being occluded by the N-termini of the alpha-subunits. Is capped by the proteasome-associated ATPase, ARC.

It localises to the cytoplasm. It carries out the reaction Cleavage of peptide bonds with very broad specificity.. The protein operates within protein degradation; proteasomal Pup-dependent pathway. With respect to regulation, the formation of the proteasomal ATPase ARC-20S proteasome complex, likely via the docking of the C-termini of ARC into the intersubunit pockets in the alpha-rings, may trigger opening of the gate for substrate entry. Interconversion between the open-gate and close-gate conformations leads to a dynamic regulation of the 20S proteasome proteolysis activity. Functionally, component of the proteasome core, a large protease complex with broad specificity involved in protein degradation. This Streptomyces avermitilis (strain ATCC 31267 / DSM 46492 / JCM 5070 / NBRC 14893 / NCIMB 12804 / NRRL 8165 / MA-4680) protein is Proteasome subunit beta 2.